The following is a 290-amino-acid chain: 6-carboxyhexanoate--CoA ligase (290 aa).

This sequence belongs to the BioW family. As to quaternary structure, homodimer. Mg(2+) is required as a cofactor.

It catalyses the reaction heptanedioate + ATP + CoA = 6-carboxyhexanoyl-CoA + AMP + diphosphate. Its pathway is metabolic intermediate metabolism; pimeloyl-CoA biosynthesis; pimeloyl-CoA from pimelate: step 1/1. In terms of biological role, catalyzes the transformation of pimelate into pimeloyl-CoA with concomitant hydrolysis of ATP to AMP. The chain is 6-carboxyhexanoate--CoA ligase from Bacillus amyloliquefaciens (Bacillus velezensis).